The following is a 315-amino-acid chain: Serine/threonine-protein phosphatase PP2A catalytic subunit 2 (315 aa).

Mn(2+) is bound by residues Asp62, His64, Asp90, and Asn122. Residue His123 is the Proton donor of the active site. The Mn(2+) site is built by His172 and His247. Positions 294 to 315 (QFEPAPRENEPHTTRRVPDYFL) are disordered. A compositionally biased stretch (basic and acidic residues) spans 298–315 (APRENEPHTTRRVPDYFL). A Leucine methyl ester modification is found at Leu315.

It belongs to the PPP phosphatase family. PP-2A subfamily. It depends on Mn(2+) as a cofactor. Post-translationally, reversibly methyl esterified on Leu-315 by leucine carboxyl methyltransferase 1 (PPM1) and protein phosphatase methylesterase 1 (PPE1). Carboxyl methylation influences the affinity of the catalytic subunit for the different regulatory subunits, thereby modulating the PP2A holoenzyme's substrate specificity, enzyme activity and cellular localization.

It catalyses the reaction O-phospho-L-seryl-[protein] + H2O = L-seryl-[protein] + phosphate. It carries out the reaction O-phospho-L-threonyl-[protein] + H2O = L-threonyl-[protein] + phosphate. The chain is Serine/threonine-protein phosphatase PP2A catalytic subunit 2 (Ppn2) from Paramecium tetraurelia.